The following is a 501-amino-acid chain: Aluminum-activated malate transporter 2 (501 aa).

The next 6 helical transmembrane spans lie at 22-42 (VVHAFKVGLALALVSSFYYYQ), 52-72 (AMWAVMTVVVVFEFSVGATLG), 78-98 (AVATLVAGGLGIGAHHLASLS), 101-121 (TVEPILLAIFVFVLAALSTFV), 130-150 (RYDYGVLIFILTFALISVSGF), and 166-186 (VIMGGVSCVLISIFVCPVWAG). A disordered region spans residues 398-425 (FKNKKKPSKSNSGSIGQAMPNKSHDDDD).

It belongs to the aromatic acid exporter (TC 2.A.85) family.

It is found in the membrane. Malate transporter. The chain is Aluminum-activated malate transporter 2 (ALMT2) from Arabidopsis thaliana (Mouse-ear cress).